Here is a 156-residue protein sequence, read N- to C-terminus: Putative pre-16S rRNA nuclease (156 aa).

Belongs to the YqgF nuclease family.

It localises to the cytoplasm. In terms of biological role, could be a nuclease involved in processing of the 5'-end of pre-16S rRNA. The protein is Putative pre-16S rRNA nuclease of Phenylobacterium zucineum (strain HLK1).